The following is a 53-amino-acid chain: Small polypeptide DEVIL 7 (53 aa).

The segment covering 1 to 16 has biased composition (basic and acidic residues); it reads MREKYTKEEAVKNWEK. Positions 1–28 are disordered; the sequence is MREKYTKEEAVKNWEKKKNKPSSPKGVG. A required for DVL/RTFL small polypeptide activity region spans residues 22 to 53; it reads SSPKGVGEFLKKKKGRFYIIGKCITMLLCSHK. A helical transmembrane segment spans residues 30 to 46; that stretch reads FLKKKKGRFYIIGKCIT.

Belongs to the DVL/RTFL small polypeptides family.

It is found in the cell membrane. In terms of biological role, small polypeptide acting as a regulatory molecule which coordinates cellular responses required for differentiation, growth and development, probably by restricting polar cell proliferation in lateral organs and coordinating socket cell recruitment and differentiation at trichome sites. In Arabidopsis thaliana (Mouse-ear cress), this protein is Small polypeptide DEVIL 7.